A 179-amino-acid polypeptide reads, in one-letter code: MSKDLEVAGRYANALFQVAQDKDLVDVFSEELTELKAALNANKDFVKLLENPTFTTEQKKNLASAVFEKINPTLRDFIYLLIDRNREDYLSVIADVYQKRVNDLRGVADADVYSVIPLSEQELTALSRVFAAKMNKTKLNIQNHIDKSLLGGVKVVIGTRIYDDSLKTKLKDMERQIKA.

This sequence belongs to the ATPase delta chain family. As to quaternary structure, F-type ATPases have 2 components, F(1) - the catalytic core - and F(0) - the membrane proton channel. F(1) has five subunits: alpha(3), beta(3), gamma(1), delta(1), epsilon(1). F(0) has three main subunits: a(1), b(2) and c(10-14). The alpha and beta chains form an alternating ring which encloses part of the gamma chain. F(1) is attached to F(0) by a central stalk formed by the gamma and epsilon chains, while a peripheral stalk is formed by the delta and b chains.

It localises to the cell membrane. Its function is as follows. F(1)F(0) ATP synthase produces ATP from ADP in the presence of a proton or sodium gradient. F-type ATPases consist of two structural domains, F(1) containing the extramembraneous catalytic core and F(0) containing the membrane proton channel, linked together by a central stalk and a peripheral stalk. During catalysis, ATP synthesis in the catalytic domain of F(1) is coupled via a rotary mechanism of the central stalk subunits to proton translocation. This protein is part of the stalk that links CF(0) to CF(1). It either transmits conformational changes from CF(0) to CF(1) or is implicated in proton conduction. This is ATP synthase subunit delta from Listeria welshimeri serovar 6b (strain ATCC 35897 / DSM 20650 / CCUG 15529 / CIP 8149 / NCTC 11857 / SLCC 5334 / V8).